The following is a 127-amino-acid chain: Holo-[acyl-carrier-protein] synthase (127 aa).

Residues D9 and E58 each coordinate Mg(2+).

The protein belongs to the P-Pant transferase superfamily. AcpS family. Requires Mg(2+) as cofactor.

The protein localises to the cytoplasm. The enzyme catalyses apo-[ACP] + CoA = holo-[ACP] + adenosine 3',5'-bisphosphate + H(+). Functionally, transfers the 4'-phosphopantetheine moiety from coenzyme A to a Ser of acyl-carrier-protein. In Shewanella putrefaciens (strain CN-32 / ATCC BAA-453), this protein is Holo-[acyl-carrier-protein] synthase.